The chain runs to 275 residues: Expansin-A23 (275 aa).

The signal sequence occupies residues M1–G27. An Expansin-like EG45 domain is found at Q72–G182. Positions Y192–G271 constitute an Expansin-like CBD domain.

It belongs to the expansin family. Expansin A subfamily.

Its subcellular location is the secreted. It is found in the cell wall. The protein localises to the membrane. Its function is as follows. Causes loosening and extension of plant cell walls by disrupting non-covalent bonding between cellulose microfibrils and matrix glucans. No enzymatic activity has been found. The sequence is that of Expansin-A23 (EXPA23) from Arabidopsis thaliana (Mouse-ear cress).